We begin with the raw amino-acid sequence, 320 residues long: Cell-cell adhesion glycoprotein 64 (320 aa).

The signal sequence occupies residues 1–19; sequence MNKFITLFVLLASVSVAMS. Intrachain disulfides connect Cys-39–Cys-57, Cys-67–Cys-79, Cys-73–Cys-86, Cys-98–Cys-110, Cys-104–Cys-115, Cys-123–Cys-138, Cys-132–Cys-147, Cys-157–Cys-171, and Cys-165–Cys-176. N-linked (GlcNAc...) asparagine glycosylation occurs at Asn-49. An N-linked (GlcNAc...) asparagine glycan is attached at Asn-80. Residues Asn-141 and Asn-158 are each glycosylated (N-linked (GlcNAc...) asparagine). Asn-187 is a glycosylation site (N-linked (GlcNAc...) asparagine). Disulfide bonds link Cys-188/Cys-202 and Cys-194/Cys-207. N-linked (GlcNAc...) asparagine glycosylation occurs at Asn-216. 4 disulfides stabilise this stretch: Cys-226–Cys-246, Cys-232–Cys-234, Cys-266–Cys-285, and Cys-270–Cys-281. A lipid anchor (GPI-like-anchor amidated serine) is attached at Ser-298. Positions 299–320 are cleaved as a propeptide — removed in mature form; that stretch reads SATTIAFNAFVVFAIVLSVLLF.

Contains 18 disulfide bonds. Post-translationally, the GPI-like-anchor contains a phosphoceramide group, rather than a phosphatidyl group.

Its subcellular location is the cell membrane. Functionally, cell-cell adhesion during development. This is Cell-cell adhesion glycoprotein 64 from Heterostelium pallidum (Cellular slime mold).